The primary structure comprises 440 residues: (S)-N-methylcoclaurine 3'-hydroxylase-like protein (440 aa).

A helical; Signal-anchor for type II membrane protein transmembrane segment spans residues 2–21 (EIVTVALIAIVFTTFLYLIV). Cys430 is a binding site for heme.

This sequence belongs to the cytochrome P450 family. The cofactor is heme.

Its subcellular location is the membrane. Its function is as follows. Involved in the biosynthesis of benzylisoquinoline alkaloids. Probably involved in papaverine biosynthesis since its transcripts are abundant only in cultivars with substantial papaverine accumulation. May catalyze the 3'-hydroxylation of (S)-coclaurine. The sequence is that of (S)-N-methylcoclaurine 3'-hydroxylase-like protein from Papaver somniferum (Opium poppy).